The following is a 191-amino-acid chain: Protein Ves (191 aa).

Belongs to the Ves family.

This Shigella flexneri protein is Protein Ves.